A 625-amino-acid chain; its full sequence is DNA mismatch repair protein MutL (625 aa).

The protein belongs to the DNA mismatch repair MutL/HexB family.

Functionally, this protein is involved in the repair of mismatches in DNA. It is required for dam-dependent methyl-directed DNA mismatch repair. May act as a 'molecular matchmaker', a protein that promotes the formation of a stable complex between two or more DNA-binding proteins in an ATP-dependent manner without itself being part of a final effector complex. This chain is DNA mismatch repair protein MutL, found in Azorhizobium caulinodans (strain ATCC 43989 / DSM 5975 / JCM 20966 / LMG 6465 / NBRC 14845 / NCIMB 13405 / ORS 571).